Reading from the N-terminus, the 193-residue chain is MSLVPYVIEQTSRGERSYDIYSRLLKDRVIFLGEEVNDTTASLVVAQLLFLESEDPDKDIYLYINSPGGSITSGMAIYDTMQYVKPDVSTICIGMAASMGSFLLTAGAPGKRFALPNSEIMIHQPLGGFKGQATDIGIHAQRILEIKKKLNSIYSERTGKPIEVIEKDTDRDHFLSAEEAKEYGLIDEVITKH.

Residue serine 98 is the Nucleophile of the active site. Histidine 123 is a catalytic residue.

This sequence belongs to the peptidase S14 family. Fourteen ClpP subunits assemble into 2 heptameric rings which stack back to back to give a disk-like structure with a central cavity, resembling the structure of eukaryotic proteasomes.

It localises to the cytoplasm. The enzyme catalyses Hydrolysis of proteins to small peptides in the presence of ATP and magnesium. alpha-casein is the usual test substrate. In the absence of ATP, only oligopeptides shorter than five residues are hydrolyzed (such as succinyl-Leu-Tyr-|-NHMec, and Leu-Tyr-Leu-|-Tyr-Trp, in which cleavage of the -Tyr-|-Leu- and -Tyr-|-Trp bonds also occurs).. In terms of biological role, cleaves peptides in various proteins in a process that requires ATP hydrolysis. Has a chymotrypsin-like activity. Plays a major role in the degradation of misfolded proteins. The sequence is that of ATP-dependent Clp protease proteolytic subunit from Clostridium acetobutylicum (strain ATCC 824 / DSM 792 / JCM 1419 / IAM 19013 / LMG 5710 / NBRC 13948 / NRRL B-527 / VKM B-1787 / 2291 / W).